The sequence spans 711 residues: Exotoxin translocation ATP-binding protein PaxB (711 aa).

The 129-residue stretch at 1–129 (MEPLMSFKQK…QVFQGNVILL (129 aa)) folds into the Peptidase C39 domain. A run of 5 helical transmembrane segments spans residues 157-177 (IFVEVMIVSIFLQLFALITPL), 195-215 (LNVITVALAIVVIFEIVLSGL), 273-293 (ALTSVLDLLFSFIFFAVMWYY), 299-319 (IVILLSLPCYIAWSIFISPIL), and 392-412 (VMIINLWLGAHLVISGDLSIG). Residues 158–440 (FVEVMIVSIF…LAQLWQDFQQ (283 aa)) form the ABC transmembrane type-1 domain. The 236-residue stretch at 472 to 707 (VTFKNIRFRY…KDGLYYYLNQ (236 aa)) folds into the ABC transporter domain. Position 506-513 (506-513 (GRSGSGKS)) interacts with ATP.

It belongs to the ABC transporter superfamily. Protein-1 exporter (TC 3.A.1.109) family. As to quaternary structure, homodimer.

The protein localises to the cell inner membrane. The catalysed reaction is ATP + H2O + proteinSide 1 = ADP + phosphate + proteinSide 2.. In terms of biological role, part of the ABC transporter complex PaxBD involved in PaxA export. Transmembrane domains (TMD) form a pore in the inner membrane and the ATP-binding domain (NBD) is responsible for energy generation. This Pasteurella aerogenes protein is Exotoxin translocation ATP-binding protein PaxB (paxB).